The following is a 178-amino-acid chain: Probable inosine/xanthosine triphosphatase (178 aa).

The protein belongs to the YjjX NTPase family. In terms of assembly, homodimer. Requires Mg(2+) as cofactor. Mn(2+) serves as cofactor.

The enzyme catalyses XTP + H2O = XDP + phosphate + H(+). It carries out the reaction ITP + H2O = IDP + phosphate + H(+). In terms of biological role, phosphatase that hydrolyzes non-canonical purine nucleotides such as XTP and ITP to their respective diphosphate derivatives. Probably excludes non-canonical purines from DNA/RNA precursor pool, thus preventing their incorporation into DNA/RNA and avoiding chromosomal lesions. The protein is Probable inosine/xanthosine triphosphatase of Pyrobaculum aerophilum (strain ATCC 51768 / DSM 7523 / JCM 9630 / CIP 104966 / NBRC 100827 / IM2).